The sequence spans 528 residues: Phosphoenolpyruvate carboxykinase (ATP) (528 aa).

The substrate site is built by Arg-56, Tyr-192, and Lys-198. ATP contacts are provided by residues Lys-198, His-217, and 233–241 (GLSGTGKTT). Positions 198 and 217 each coordinate Mn(2+). Position 254 (Asp-254) interacts with Mn(2+). ATP contacts are provided by Glu-282, Arg-319, and Thr-444. Substrate is bound at residue Arg-319.

This sequence belongs to the phosphoenolpyruvate carboxykinase (ATP) family. Requires Mn(2+) as cofactor.

Its subcellular location is the cytoplasm. It catalyses the reaction oxaloacetate + ATP = phosphoenolpyruvate + ADP + CO2. It participates in carbohydrate biosynthesis; gluconeogenesis. Involved in the gluconeogenesis. Catalyzes the conversion of oxaloacetate (OAA) to phosphoenolpyruvate (PEP) through direct phosphoryl transfer between the nucleoside triphosphate and OAA. This is Phosphoenolpyruvate carboxykinase (ATP) from Bacillus cereus (strain G9842).